Consider the following 84-residue polypeptide: SPbeta prophage-derived uncharacterized protein YomY (84 aa).

The chain is SPbeta prophage-derived uncharacterized protein YomY (yomY) from Bacillus subtilis (strain 168).